Consider the following 124-residue polypeptide: Small ribosomal subunit protein uS12 (124 aa).

3-methylthioaspartic acid is present on Asp-89. A disordered region spans residues 103–124; it reads DTAGVKDRRQSRSKYGAKSPKE.

It belongs to the universal ribosomal protein uS12 family. As to quaternary structure, part of the 30S ribosomal subunit. Contacts proteins S8 and S17. May interact with IF1 in the 30S initiation complex.

Functionally, with S4 and S5 plays an important role in translational accuracy. Its function is as follows. Interacts with and stabilizes bases of the 16S rRNA that are involved in tRNA selection in the A site and with the mRNA backbone. Located at the interface of the 30S and 50S subunits, it traverses the body of the 30S subunit contacting proteins on the other side and probably holding the rRNA structure together. The combined cluster of proteins S8, S12 and S17 appears to hold together the shoulder and platform of the 30S subunit. The chain is Small ribosomal subunit protein uS12 from Prochlorococcus marinus (strain NATL2A).